Consider the following 202-residue polypeptide: Alcohol dehydrogenase-related 31 kDa protein (202 aa).

11 to 34 (YVADCGGIALETSKVLMTKNIAKL) serves as a coordination point for NAD(+). Serine 139 is a binding site for substrate. Tyrosine 152 serves as the catalytic Proton acceptor.

The protein belongs to the short-chain dehydrogenases/reductases (SDR) family.

This chain is Alcohol dehydrogenase-related 31 kDa protein (Adhr), found in Drosophila erecta (Fruit fly).